Here is a 453-residue protein sequence, read N- to C-terminus: Ribosomal protein uS12 methylthiotransferase RimO (453 aa).

One can recognise an MTTase N-terminal domain in the interval threonine 4–glutamate 120. The [4Fe-4S] cluster site is built by cysteine 13, cysteine 49, cysteine 83, cysteine 161, cysteine 165, and cysteine 168. The 231-residue stretch at serine 147–glutamate 377 folds into the Radical SAM core domain. In terms of domain architecture, TRAM spans glutamine 380–serine 450.

This sequence belongs to the methylthiotransferase family. RimO subfamily. [4Fe-4S] cluster serves as cofactor.

The protein resides in the cytoplasm. The catalysed reaction is L-aspartate(89)-[ribosomal protein uS12]-hydrogen + (sulfur carrier)-SH + AH2 + 2 S-adenosyl-L-methionine = 3-methylsulfanyl-L-aspartate(89)-[ribosomal protein uS12]-hydrogen + (sulfur carrier)-H + 5'-deoxyadenosine + L-methionine + A + S-adenosyl-L-homocysteine + 2 H(+). In terms of biological role, catalyzes the methylthiolation of an aspartic acid residue of ribosomal protein uS12. The sequence is that of Ribosomal protein uS12 methylthiotransferase RimO from Syntrophus aciditrophicus (strain SB).